Consider the following 253-residue polypeptide: MRKKKFLSKVSFGSLFLLCGTVLSACTGIQADLRNLIKEATGKDIDVYKAIKTTEGKKNMITSLKKSYKVNPKDTTKLLLDAWKQSAEKGELGIPDFDFDDVIYPASKDPFTMERKIEYFQMTYQSFKDLSIEAKLSYTFNWFGDYSSGDFTAKKGDKHYFDLFPKIKSNSDPGKQFTTEKFLTKEEKIKVNGKEITRNLEWIEFSASLSFSLKGKDDVSEKSVNKFLSTFANNTEGYSSDINLFIYLEYLIK.

An N-terminal signal peptide occupies residues 1-25 (MRKKKFLSKVSFGSLFLLCGTVLSA). Cys26 carries N-palmitoyl cysteine lipidation. Cys26 is lipidated: S-diacylglycerol cysteine.

Belongs to the MG439/MG440 family.

It localises to the cell membrane. This is an uncharacterized protein from Mycoplasma pneumoniae (strain ATCC 29342 / M129 / Subtype 1) (Mycoplasmoides pneumoniae).